The primary structure comprises 347 residues: MNIAPPLAITTDADLGPLNTFGLPARAARLLRVRGEEDVRALLAEPGWRGEPRLVLGGGSNLVLRGDFAGTVLKVEIAGRRLVGVREDADGAAWIVEAGAGECWHDFVRWTLAQGWPGLENLSLIPGTVGAAPIQNIGAYGVELTERFDALDAIDLDSGETRSFDRTTCAFGYRDSVFKRAAGRWLVLRVRFRLPQAWAPVGRYADVAAELAARGIAAPGAADISDAVIAIRRRKLPDPAKIGNAGSFFKNPVVDAAAWARLAAAHPEAPHYPQRDGSIKLAAGWLIEQAGWKGRNLGPVGCYERQALVLVNRGGACGEDVARLAAAIQADVEARFGIRLEPEPVFV.

Residues 23 to 197 enclose the FAD-binding PCMH-type domain; that stretch reads LPARAARLLR…LRVRFRLPQA (175 aa). Arg174 is a catalytic residue. Ser247 serves as the catalytic Proton donor. Residue Glu343 is part of the active site.

The protein belongs to the MurB family. FAD is required as a cofactor.

The protein localises to the cytoplasm. It catalyses the reaction UDP-N-acetyl-alpha-D-muramate + NADP(+) = UDP-N-acetyl-3-O-(1-carboxyvinyl)-alpha-D-glucosamine + NADPH + H(+). It participates in cell wall biogenesis; peptidoglycan biosynthesis. In terms of biological role, cell wall formation. This chain is UDP-N-acetylenolpyruvoylglucosamine reductase, found in Azoarcus sp. (strain BH72).